We begin with the raw amino-acid sequence, 377 residues long: Dual-specificity RNA methyltransferase RlmN (377 aa).

Glutamate 102 functions as the Proton acceptor in the catalytic mechanism. Residues 108–345 (EPDRRTLCVS…AVVRKNRGGD (238 aa)) enclose the Radical SAM core domain. Cysteines 115 and 350 form a disulfide. Cysteine 122, cysteine 126, and cysteine 129 together coordinate [4Fe-4S] cluster. S-adenosyl-L-methionine is bound by residues 177–178 (GE), serine 209, 231–233 (SLN), and asparagine 307. The active-site S-methylcysteine intermediate is the cysteine 350. The segment at 354 to 377 (AAEGGPGDPRRPAPPPLTRLPAAG) is disordered.

This sequence belongs to the radical SAM superfamily. RlmN family. [4Fe-4S] cluster is required as a cofactor.

The protein resides in the cytoplasm. It catalyses the reaction adenosine(2503) in 23S rRNA + 2 reduced [2Fe-2S]-[ferredoxin] + 2 S-adenosyl-L-methionine = 2-methyladenosine(2503) in 23S rRNA + 5'-deoxyadenosine + L-methionine + 2 oxidized [2Fe-2S]-[ferredoxin] + S-adenosyl-L-homocysteine. It carries out the reaction adenosine(37) in tRNA + 2 reduced [2Fe-2S]-[ferredoxin] + 2 S-adenosyl-L-methionine = 2-methyladenosine(37) in tRNA + 5'-deoxyadenosine + L-methionine + 2 oxidized [2Fe-2S]-[ferredoxin] + S-adenosyl-L-homocysteine. Functionally, specifically methylates position 2 of adenine 2503 in 23S rRNA and position 2 of adenine 37 in tRNAs. m2A2503 modification seems to play a crucial role in the proofreading step occurring at the peptidyl transferase center and thus would serve to optimize ribosomal fidelity. In Anaeromyxobacter sp. (strain Fw109-5), this protein is Dual-specificity RNA methyltransferase RlmN.